An 851-amino-acid polypeptide reads, in one-letter code: Glycogen phosphorylase, liver form (851 aa).

Ala-2 is modified (N-acetylalanine). Phosphoserine; by PHK; in form phosphorylase a is present on Ser-15. Residues 43 to 45, Tyr-76, and Arg-310 each bind AMP; that span reads DRN. Lys-364 is modified (N6-succinyllysine). Lys-470 is modified (N6-acetyllysine). Phosphoserine is present on residues Ser-524, Ser-561, and Ser-639. Lys-681 is subject to N6-(pyridoxal phosphate)lysine. Lys-796 carries the post-translational modification N6-acetyllysine.

The protein belongs to the glycogen phosphorylase family. Homodimer; enzymatically active. Interacts with PPP1R3B; recruits the phosphatase PP1 which dephosphorylates and inactivates PYGL/glycogen phosphorylase. Requires pyridoxal 5'-phosphate as cofactor. Post-translationally, acetylation, which is up-regulated by glucose and insulin and down-regulated by glucagon, inhibits the glycogen phosphorylase activity by promoting PPP1R3B-mediated recruitment of phosphatase PP1 and Ser-15 dephosphorylation. In terms of processing, phosphorylation at Ser-15 converts inactive phosphorylase b into active phosphorylase a. Dephosphorylation of Ser-15 by phosphatase PP1 inactivates the enzyme.

The protein localises to the cytoplasm. It is found in the cytosol. It carries out the reaction [(1-&gt;4)-alpha-D-glucosyl](n) + phosphate = [(1-&gt;4)-alpha-D-glucosyl](n-1) + alpha-D-glucose 1-phosphate. With respect to regulation, allosterically regulated through the non-covalent binding of metabolites, being activated by AMP and inhibited by ATP, ADP, and glucose-6-phosphate. The activity is also controlled by post-translational modifications including phosphorylation and acetylation. Functionally, allosteric enzyme that catalyzes the rate-limiting step in glycogen catabolism, the phosphorolytic cleavage of glycogen to produce glucose-1-phosphate, and plays a central role in maintaining cellular and organismal glucose homeostasis. The protein is Glycogen phosphorylase, liver form of Bos taurus (Bovine).